The chain runs to 256 residues: Undecaprenyl-diphosphatase (256 aa).

Transmembrane regions (helical) follow at residues 1-21 (MTIL…FLPI), 39-59 (NAIN…AVIF), 70-90 (IDLW…GFIF), 97-117 (LFSL…FLIV), 134-154 (AISL…LIPG), 176-196 (AEFS…YDLL), 205-225 (ANLI…YLSI), and 235-255 (FTFF…LLFF).

This sequence belongs to the UppP family.

It localises to the cell inner membrane. The enzyme catalyses di-trans,octa-cis-undecaprenyl diphosphate + H2O = di-trans,octa-cis-undecaprenyl phosphate + phosphate + H(+). Functionally, catalyzes the dephosphorylation of undecaprenyl diphosphate (UPP). Confers resistance to bacitracin. The polypeptide is Undecaprenyl-diphosphatase (Sulfurimonas denitrificans (strain ATCC 33889 / DSM 1251) (Thiomicrospira denitrificans (strain ATCC 33889 / DSM 1251))).